Here is a 549-residue protein sequence, read N- to C-terminus: Thermosome subunit alpha (549 aa).

The disordered stretch occupies residues 529 to 549 (EGRQGAECPPNGCMGGMDMRM).

This sequence belongs to the TCP-1 chaperonin family. Forms a Heterooligomeric complex of two stacked eight-membered rings.

Its function is as follows. Molecular chaperone; binds unfolded polypeptides in vitro, and has a weak ATPase activity. The chain is Thermosome subunit alpha (thsA) from Thermococcus sp. (strain KS-8).